Reading from the N-terminus, the 215-residue chain is Urease accessory protein UreG (215 aa).

GTP is bound at residue 24–31 (GPVGSGKT).

The protein belongs to the SIMIBI class G3E GTPase family. UreG subfamily. Homodimer. UreD, UreF and UreG form a complex that acts as a GTP-hydrolysis-dependent molecular chaperone, activating the urease apoprotein by helping to assemble the nickel containing metallocenter of UreC. The UreE protein probably delivers the nickel.

The protein resides in the cytoplasm. Facilitates the functional incorporation of the urease nickel metallocenter. This process requires GTP hydrolysis, probably effectuated by UreG. In Burkholderia cenocepacia (strain HI2424), this protein is Urease accessory protein UreG.